The chain runs to 323 residues: Putative gluconeogenesis factor (323 aa).

The protein belongs to the gluconeogenesis factor family.

It localises to the cytoplasm. In terms of biological role, required for morphogenesis under gluconeogenic growth conditions. This is Putative gluconeogenesis factor from Thermoanaerobacterium thermosulfurigenes (Clostridium thermosulfurogenes).